The following is a 222-amino-acid chain: N-(5'-phosphoribosyl)anthranilate isomerase (222 aa).

This sequence belongs to the TrpF family.

It catalyses the reaction N-(5-phospho-beta-D-ribosyl)anthranilate = 1-(2-carboxyphenylamino)-1-deoxy-D-ribulose 5-phosphate. The protein operates within amino-acid biosynthesis; L-tryptophan biosynthesis; L-tryptophan from chorismate: step 3/5. This Xanthomonas euvesicatoria pv. vesicatoria (strain 85-10) (Xanthomonas campestris pv. vesicatoria) protein is N-(5'-phosphoribosyl)anthranilate isomerase.